Here is a 1191-residue protein sequence, read N- to C-terminus: Phosphatidylinositol 3,4,5-trisphosphate 5-phosphatase 1 (1191 aa).

The 97-residue stretch at 8-104 (WNHGNITRSK…GLVTHLQYPV (97 aa)) folds into the SH2 domain. Residues 122–148 (SVMSPPELPPRNIPMSAGPSEAKDLPL) form a disordered region. Residues 127–132 (PELPPR) carry the SH3-binding 1 motif. Position 246 is a phosphoserine (Ser-246). The NPXY motif 1 signature appears at 915–918 (NPNY). Tyr-918 carries the phosphotyrosine modification. Ser-935 is modified (phosphoserine). A Phosphotyrosine modification is found at Tyr-945. Disordered regions lie at residues 947-994 (QLPK…EARP) and 1021-1191 (YGSV…TAMQ). Positions 962 to 972 (PPTPPSQPPLS) are enriched in pro residues. The residue at position 964 (Thr-964) is a Phosphothreonine. Residues Ser-967 and Ser-972 each carry the phosphoserine modification. An SH3-binding 2 motif is present at residues 970–975 (PLSPKK). Positions 1015 to 1029 (MFENPLYGSVSSFPK) are interaction with DAB2. Residues 1018–1021 (NPLY) carry the NPXY motif 2 motif. The residue at position 1021 (Tyr-1021) is a Phosphotyrosine. Residues 1032 to 1046 (PRKEQESPKMLRKEP) are compositionally biased toward basic and acidic residues. The short motif at 1039-1050 (PKMLRKEPPPCP) is the SH3-binding 3 element. Over residues 1141 to 1150 (IPAPRPPLPV) the composition is skewed to pro residues. The segment covering 1162–1184 (KGRDYRDNTELPHHGKHRQEEGL) has biased composition (basic and acidic residues).

The protein belongs to the inositol 1,4,5-trisphosphate 5-phosphatase family. In terms of assembly, interacts with tyrosine phosphorylated form of SHC1. Interacts with tyrosine phosphorylated form of DOK1. Interacts with tyrosine phosphorylated form of DOK3. Interacts with tyrosine phosphorylated form of SLAMF1/CD150. Interacts with PTPN11/SHP-2 in response to IL-3. Interacts with receptor EPOR. Interacts with receptors MS4A2/FCER1B and FCER1G. Interacts with receptors FCGR2B and FCGR3. Interacts with receptor FCGR2A, leading to regulate gene expression during the phagocytic process. Interacts with GRB2. Interacts with PLCG1. Interacts with tyrosine kinases SRC and TEC. Interacts with CRKL. Interacts with c-Met/MET. Interacts with MILR1 (tyrosine-phosphorylated). Isoform 5 interacts with IL6ST/gp130. Can weakly interact (via NPXY motif 2) with DAB2 (via PID domain); the interaction is impaired by tyrosine phosphorylation of the NPXY motif. Interacts (via SH2 domain) with tyrosine phosphorylated KLRC1 (via ITIM). Interacts with MPL/TPOR. Tyrosine phosphorylated by the members of the SRC family after exposure to a diverse array of extracellular stimuli such as cytokines, growth factors, antibodies, chemokines, integrin ligands and hypertonic and oxidative stress. Phosphorylated upon IgG receptor FCGR2B-binding. In terms of tissue distribution, specifically expressed in immune and hematopoietic cells. Levels vary considerably within this compartment. Lost during erythropoiesis when erythroid cells become Ter119+. Increases substantially with T-cell maturation and when resting B-cells are activated. Also present in mature granulocytes, monocyte/macrophages, mast cells and platelets. Isoform 5 is the only form expressed in embryonic stem (ES) cells and is coexpressed with other isoforms in hematopoietic stem cells, and disappears with differentiation.

It is found in the cytoplasm. It localises to the cell membrane. The protein localises to the membrane raft. Its subcellular location is the cytoskeleton. It carries out the reaction a 1,2-diacyl-sn-glycero-3-phospho-(1D-myo-inositol-3,4,5-trisphosphate) + H2O = a 1,2-diacyl-sn-glycero-3-phospho-(1D-myo-inositol-3,4-bisphosphate) + phosphate. The catalysed reaction is a 1,2-diacyl-sn-glycero-3-phospho-(1D-myo-inositol-4,5-bisphosphate) + H2O = a 1,2-diacyl-sn-glycero-3-phospho-(1D-myo-inositol 4-phosphate) + phosphate. The enzyme catalyses 1D-myo-inositol 1,3,4,5-tetrakisphosphate + H2O = 1D-myo-inositol 1,3,4-trisphosphate + phosphate. With respect to regulation, activated upon translocation to the sites of synthesis of PtdIns(3,4,5)P3 in the membrane. In terms of biological role, phosphatidylinositol (PtdIns) phosphatase that specifically hydrolyzes the 5-phosphate of phosphatidylinositol-3,4,5-trisphosphate (PtdIns(3,4,5)P3) to produce PtdIns(3,4)P2, thereby negatively regulating the PI3K (phosphoinositide 3-kinase) pathways. Also able to hydrolyze the 5-phosphate of phosphatidylinositol-4,5-bisphosphate (PtdIns(4,5)P3) and inositol 1,3,4,5-tetrakisphosphate. Acts as a negative regulator of B-cell antigen receptor signaling. Mediates signaling from the FC-gamma-RIIB receptor (FCGR2B), playing a central role in terminating signal transduction from activating immune/hematopoietic cell receptor systems. Acts as a negative regulator of myeloid cell proliferation/survival and chemotaxis, mast cell degranulation, immune cells homeostasis, integrin alpha-IIb/beta-3 signaling in platelets and JNK signaling in B-cells. Regulates proliferation of osteoclast precursors, macrophage programming, phagocytosis and activation and is required for endotoxin tolerance. Involved in the control of cell-cell junctions, CD32a signaling in neutrophils and modulation of EGF-induced phospholipase C activity. Key regulator of neutrophil migration, by governing the formation of the leading edge and polarization required for chemotaxis. Modulates FCGR3/CD16-mediated cytotoxicity in NK cells. Mediates the activin/TGF-beta-induced apoptosis through its Smad-dependent expression. In Mus musculus (Mouse), this protein is Phosphatidylinositol 3,4,5-trisphosphate 5-phosphatase 1 (Inpp5d).